We begin with the raw amino-acid sequence, 96 residues long: Co-chaperonin GroES (96 aa).

It belongs to the GroES chaperonin family. In terms of assembly, heptamer of 7 subunits arranged in a ring. Interacts with the chaperonin GroEL.

It is found in the cytoplasm. Functionally, together with the chaperonin GroEL, plays an essential role in assisting protein folding. The GroEL-GroES system forms a nano-cage that allows encapsulation of the non-native substrate proteins and provides a physical environment optimized to promote and accelerate protein folding. GroES binds to the apical surface of the GroEL ring, thereby capping the opening of the GroEL channel. This is Co-chaperonin GroES from Streptococcus pyogenes serotype M18 (strain MGAS8232).